The following is a 761-amino-acid chain: Proton-coupled zinc antiporter SLC30A5 (761 aa).

Methionine 1 carries the N-acetylmethionine modification. The Cytoplasmic segment spans residues 1–29 (MEEKYGGDARPGPGGGLGPVDVPSARLTR). Residues 30–46 (YILLLCLTKCLKAVGLF) traverse the membrane as a helical segment. At 47 to 54 (ESYDLLKA) the chain is on the lumenal side. A helical transmembrane segment spans residues 55–75 (VHIVQFIFILKLGTAFFMVLF). The Cytoplasmic portion of the chain corresponds to 76 to 96 (QKPFSSGKPITKHQWIKIFKH). The chain crosses the membrane as a helical span at residues 97–117 (AVAGCIISLLWFFGLTLCGPL). Residue arginine 118 is a topological domain, lumenal. A helical transmembrane segment spans residues 119–139 (TLLLFEHSDIVVISLLSVLFT). Topologically, residues 140-150 (SSGGGPAKTRG) are cytoplasmic. Residues 151–171 (AAFFIIAVICLLLFDNDDLMA) form a helical membrane-spanning segment. Residues 172-191 (KMAEHPEGHHDSALTHMLYT) are Lumenal-facing. A helical membrane pass occupies residues 192–212 (AIAFLGVADHKGGVLLLVLAL). Topologically, residues 213-236 (CCKVGFHTASRKLSIDVGGAKRLQ) are cytoplasmic. A helical membrane pass occupies residues 237 to 257 (ALSQLVSVFLLCPWVIVLSVT). Residues 258–264 (TESKVES) are Lumenal-facing. The helical transmembrane segment at 265–285 (WFSLIMPFTTVIFFVMILDFY) threads the bilayer. Residues 286–301 (MDSVCSVKMDVSKCAR) lie on the Cytoplasmic side of the membrane. A helical membrane pass occupies residues 302-322 (YGSFPIFISALLFGNFWTHPI). The Lumenal portion of the chain corresponds to 323–340 (TDQLRAMNRAAHQESTEH). Residues 341 to 361 (VLSGGVVVSAVFFILSANILS) traverse the membrane as a helical segment. Residues 362-416 (SPSKRGQKGTLIGYSPEGTPLYHFMGDAFQHSSQSVPRFIKDSLKQVLEESDSRQ) lie on the Cytoplasmic side of the membrane. Residues 417-437 (IFYFLCLNLLFTFVELFYGVL) form a helical membrane-spanning segment. Residues 418–636 (FYFLCLNLLF…VLIFLSVIPL (219 aa)) form a mediates homodimerization with SLC30A6 region. Residues 438–446 (TNSLGLISD) lie on the Lumenal side of the membrane. The helical transmembrane segment at 447–467 (GFHMLFDCSALVMGLFAALMS) threads the bilayer. Zn(2+)-binding residues include histidine 449 and aspartate 453. The Cytoplasmic segment spans residues 468-481 (RWKATRIFSYGYGR). A helical membrane pass occupies residues 482–502 (IEILSGFINGLFLIVIAFFVF). At 503–518 (MESVARLIDPPELDTN) the chain is on the lumenal side. A helical transmembrane segment spans residues 519–539 (MLTPVSVGGLIVNLIGICAFS). Residues 540 to 574 (HAHSHGHGASQGNCHSDHGHSHHAHGHGHDHGHSH) form a his-rich loop; required for zinc transport region. The Cytoplasmic segment spans residues 540–588 (HAHSHGHGASQGNCHSDHGHSHHAHGHGHDHGHSHGFTGGGMNANMRGV). The interval 549 to 576 (SQGNCHSDHGHSHHAHGHGHDHGHSHGF) is disordered. The helical transmembrane segment at 589–609 (FLHVLADTLGSIGVIVSTVLI) threads the bilayer. Zn(2+) is bound by residues histidine 591 and aspartate 595. The Lumenal segment spans residues 610-613 (EQFG). A helical transmembrane segment spans residues 614–634 (WFIADPLCSLFIAVLIFLSVI). At 635 to 761 (PLIKDACQVL…KYCKDGTYIM (127 aa)) the chain is on the cytoplasmic side.

The protein belongs to the cation diffusion facilitator (CDF) transporter (TC 2.A.4) family. SLC30A subfamily. Heterodimer with SLC30A6/ZNT6; form a functional zinc ion transmembrane transporter. Post-translationally, could homodimerize through the formation of dityrosine bonds upon oxidative stress. As to expression, ubiquitously expressed.

Its subcellular location is the golgi apparatus. It localises to the golgi stack membrane. The protein localises to the cytoplasmic vesicle. It is found in the COPII-coated vesicle membrane. The protein resides in the secretory vesicle membrane. Its subcellular location is the trans-Golgi network membrane. The enzyme catalyses Zn(2+)(in) + 2 H(+)(out) = Zn(2+)(out) + 2 H(+)(in). In terms of biological role, together with SLC30A6 forms a functional proton-coupled zinc ion antiporter mediating zinc entry into the lumen of organelles along the secretory pathway. By contributing to zinc ion homeostasis within the early secretory pathway, regulates the activation and folding of enzymes like alkaline phosphatases and enzymes involved in phosphatidylinositol glycan anchor biosynthesis. Through the transport of zinc into secretory granules of pancreatic beta-cells, plays an important role in the storage and secretion of insulin. This Mus musculus (Mouse) protein is Proton-coupled zinc antiporter SLC30A5.